A 397-amino-acid polypeptide reads, in one-letter code: Phosphoglycerate kinase (397 aa).

Substrate-binding positions include 25–27 (DLN), Arg41, 64–67 (HLGR), Arg118, and Arg151. Residues Lys202, Glu324, and 350-353 (GGDT) contribute to the ATP site.

The protein belongs to the phosphoglycerate kinase family. As to quaternary structure, monomer.

It localises to the cytoplasm. It catalyses the reaction (2R)-3-phosphoglycerate + ATP = (2R)-3-phospho-glyceroyl phosphate + ADP. It participates in carbohydrate degradation; glycolysis; pyruvate from D-glyceraldehyde 3-phosphate: step 2/5. The polypeptide is Phosphoglycerate kinase (Albidiferax ferrireducens (strain ATCC BAA-621 / DSM 15236 / T118) (Rhodoferax ferrireducens)).